The primary structure comprises 81 residues: Exodeoxyribonuclease 7 small subunit (81 aa).

It belongs to the XseB family. Heterooligomer composed of large and small subunits.

The protein resides in the cytoplasm. It catalyses the reaction Exonucleolytic cleavage in either 5'- to 3'- or 3'- to 5'-direction to yield nucleoside 5'-phosphates.. In terms of biological role, bidirectionally degrades single-stranded DNA into large acid-insoluble oligonucleotides, which are then degraded further into small acid-soluble oligonucleotides. This chain is Exodeoxyribonuclease 7 small subunit, found in Pasteurella multocida (strain Pm70).